The primary structure comprises 455 residues: Phosphoglucosamine mutase (455 aa).

The active-site Phosphoserine intermediate is the S108. 4 residues coordinate Mg(2+): S108, D248, D250, and D252. S108 carries the phosphoserine modification.

It belongs to the phosphohexose mutase family. Mg(2+) is required as a cofactor. Post-translationally, activated by phosphorylation.

It carries out the reaction alpha-D-glucosamine 1-phosphate = D-glucosamine 6-phosphate. Catalyzes the conversion of glucosamine-6-phosphate to glucosamine-1-phosphate. This is Phosphoglucosamine mutase from Leuconostoc mesenteroides subsp. mesenteroides (strain ATCC 8293 / DSM 20343 / BCRC 11652 / CCM 1803 / JCM 6124 / NCDO 523 / NBRC 100496 / NCIMB 8023 / NCTC 12954 / NRRL B-1118 / 37Y).